Consider the following 294-residue polypeptide: 4-hydroxy-tetrahydrodipicolinate synthase (294 aa).

Pyruvate is bound at residue T44. Y132 acts as the Proton donor/acceptor in catalysis. The Schiff-base intermediate with substrate role is filled by K161. I206 serves as a coordination point for pyruvate.

It belongs to the DapA family. As to quaternary structure, homotetramer; dimer of dimers.

It is found in the cytoplasm. The catalysed reaction is L-aspartate 4-semialdehyde + pyruvate = (2S,4S)-4-hydroxy-2,3,4,5-tetrahydrodipicolinate + H2O + H(+). Its pathway is amino-acid biosynthesis; L-lysine biosynthesis via DAP pathway; (S)-tetrahydrodipicolinate from L-aspartate: step 3/4. In terms of biological role, catalyzes the condensation of (S)-aspartate-beta-semialdehyde [(S)-ASA] and pyruvate to 4-hydroxy-tetrahydrodipicolinate (HTPA). The protein is 4-hydroxy-tetrahydrodipicolinate synthase of Thermotoga neapolitana (strain ATCC 49049 / DSM 4359 / NBRC 107923 / NS-E).